A 327-amino-acid polypeptide reads, in one-letter code: MIQNQPHFYRGRFSVAPMLDWTTRHCRYFHRQFSQHALLYTEMVTTGAIIHAKYDHLEFSPAENPVALQLGGSDPTQLAQCAKIAQQRGYTEINLNVGCPSDRVQNGMFGACLMAKADLVADCVSAMQTEVSIPVTVKTRIGIDDLDSYEFLCEFVQKVHEAGCQEFIIHARKAWLSGLSPKENREIPPLDYERVYQLKRDFPHLLMSINGGIKTLEEMQQHLQYMDGVMVGREAYQNPSLLGYIDQALFDPTCPVVTPREAVEKMFPYIEQQLSQGVYLNHVVRHMLGAFQSCKGARQWRRYLSENAHKAGAGLEVVEKALSFVAS.

FMN contacts are provided by residues 17–19 (PML) and Gln-69. The active-site Proton donor is the Cys-99. Residues Lys-138, His-170, 210–212 (NGG), and 232–233 (GR) contribute to the FMN site.

Belongs to the Dus family. DusA subfamily. Requires FMN as cofactor.

It carries out the reaction 5,6-dihydrouridine(20) in tRNA + NADP(+) = uridine(20) in tRNA + NADPH + H(+). The enzyme catalyses 5,6-dihydrouridine(20) in tRNA + NAD(+) = uridine(20) in tRNA + NADH + H(+). It catalyses the reaction 5,6-dihydrouridine(20a) in tRNA + NADP(+) = uridine(20a) in tRNA + NADPH + H(+). The catalysed reaction is 5,6-dihydrouridine(20a) in tRNA + NAD(+) = uridine(20a) in tRNA + NADH + H(+). Catalyzes the synthesis of 5,6-dihydrouridine (D), a modified base found in the D-loop of most tRNAs, via the reduction of the C5-C6 double bond in target uridines. Specifically modifies U20 and U20a in tRNAs. The polypeptide is tRNA-dihydrouridine(20/20a) synthase (Pasteurella multocida (strain Pm70)).